Consider the following 188-residue polypeptide: Elongation factor P-like protein (188 aa).

The protein belongs to the elongation factor P family.

This is Elongation factor P-like protein from Xanthomonas axonopodis pv. citri (strain 306).